Here is a 171-residue protein sequence, read N- to C-terminus: S-ribosylhomocysteine lyase (171 aa).

Residues His-54, His-58, and Cys-128 each coordinate Fe cation.

The protein belongs to the LuxS family. As to quaternary structure, homodimer. The cofactor is Fe cation.

It carries out the reaction S-(5-deoxy-D-ribos-5-yl)-L-homocysteine = (S)-4,5-dihydroxypentane-2,3-dione + L-homocysteine. Its function is as follows. Involved in the synthesis of autoinducer 2 (AI-2) which is secreted by bacteria and is used to communicate both the cell density and the metabolic potential of the environment. The regulation of gene expression in response to changes in cell density is called quorum sensing. Catalyzes the transformation of S-ribosylhomocysteine (RHC) to homocysteine (HC) and 4,5-dihydroxy-2,3-pentadione (DPD). The sequence is that of S-ribosylhomocysteine lyase from Aliarcobacter butzleri (strain RM4018) (Arcobacter butzleri).